A 310-amino-acid chain; its full sequence is Ribonuclease Z (310 aa).

Zn(2+) contacts are provided by H61, H63, D65, H66, and H139. The active-site Proton acceptor is D65. The interval 150–175 (EDDRPGRFDRPKAEELGVPVGPKFGR) is disordered. The span at 153-164 (RPGRFDRPKAEE) shows a compositional bias: basic and acidic residues. 2 residues coordinate Zn(2+): D210 and H268.

Belongs to the RNase Z family. As to quaternary structure, homodimer. Requires Zn(2+) as cofactor.

The enzyme catalyses Endonucleolytic cleavage of RNA, removing extra 3' nucleotides from tRNA precursor, generating 3' termini of tRNAs. A 3'-hydroxy group is left at the tRNA terminus and a 5'-phosphoryl group is left at the trailer molecule.. Functionally, zinc phosphodiesterase, which displays some tRNA 3'-processing endonuclease activity. Probably involved in tRNA maturation, by removing a 3'-trailer from precursor tRNA. The sequence is that of Ribonuclease Z from Halorubrum lacusprofundi (strain ATCC 49239 / DSM 5036 / JCM 8891 / ACAM 34).